A 325-amino-acid polypeptide reads, in one-letter code: ATP phosphoribosyltransferase (325 aa).

It belongs to the ATP phosphoribosyltransferase family. Long subfamily. Requires Mg(2+) as cofactor.

It localises to the cytoplasm. The enzyme catalyses 1-(5-phospho-beta-D-ribosyl)-ATP + diphosphate = 5-phospho-alpha-D-ribose 1-diphosphate + ATP. Its pathway is amino-acid biosynthesis; L-histidine biosynthesis; L-histidine from 5-phospho-alpha-D-ribose 1-diphosphate: step 1/9. Its activity is regulated as follows. Feedback inhibited by histidine. In terms of biological role, catalyzes the condensation of ATP and 5-phosphoribose 1-diphosphate to form N'-(5'-phosphoribosyl)-ATP (PR-ATP). Has a crucial role in the pathway because the rate of histidine biosynthesis seems to be controlled primarily by regulation of HisG enzymatic activity. The polypeptide is ATP phosphoribosyltransferase (Bradyrhizobium diazoefficiens (strain JCM 10833 / BCRC 13528 / IAM 13628 / NBRC 14792 / USDA 110)).